A 1030-amino-acid chain; its full sequence is Peroxisomal ATPase PEX6 (1030 aa).

The interval 478–683 is AAA-cassette D1; that stretch reads VLLHSTTNNV…VETARMTATA (206 aa). Residues 767–956 form an AAA-cassette D2 region; it reads GILFYGPPGT…CSDAMLNAMS (190 aa). 772-779 serves as a coordination point for ATP; the sequence is GPPGTGKT.

Belongs to the AAA ATPase family. Interacts with PEX1; forming the PEX1-PEX6 AAA ATPase complex, which is composed of a heterohexamer formed by a trimer of PEX1-PEX6 dimers. Interacts with PEX15; anchors PEX1-PEX6 heterooligomers to the peroxisomal membrane and mediates their association with the peroxisomal importomer. Interacts with UBP15.

Its subcellular location is the cytoplasm. It localises to the cytosol. The protein localises to the peroxisome membrane. It catalyses the reaction ATP + H2O = ADP + phosphate + H(+). Functionally, component of the PEX1-PEX6 AAA ATPase complex, a protein dislocase complex that mediates the ATP-dependent extraction of the PEX5 receptor from peroxisomal membranes, an essential step for PEX5 recycling. Specifically recognizes PEX5 monoubiquitinated at 'Cys-6', and pulls it out of the peroxisome lumen through the PEX2-PEX10-PEX12 retrotranslocation channel. Extraction by the PEX1-PEX6 AAA ATPase complex is accompanied by unfolding of the TPR repeats and release of bound cargo from PEX5. The chain is Peroxisomal ATPase PEX6 from Saccharomyces cerevisiae (strain ATCC 204508 / S288c) (Baker's yeast).